The primary structure comprises 851 residues: Periplasmic nitrate reductase (851 aa).

Positions 1 to 29 form a signal peptide, tat-type signal; it reads MQSNRRDFLKAQALAASAAAAGIPIVVEA. In terms of domain architecture, 4Fe-4S Mo/W bis-MGD-type spans 44–100; that stretch reads VRWDKAPCRFCGTGCAVMVGVQEGKVVATQGDPEAPVNRGLNCIKGYFLSKIMYGRD. Residues Cys-51, Cys-54, Cys-58, and Cys-86 each contribute to the [4Fe-4S] cluster site. Residues Lys-88, Gln-155, Asn-180, Cys-184, 217 to 224, 248 to 252, and 267 to 269 each bind Mo-bis(molybdopterin guanine dinucleotide); these read WGSNMAEM, STYEH, and QTD. The interval 317–338 is disordered; it reads DATSNGYPGADGKPKGNPNDST. Mo-bis(molybdopterin guanine dinucleotide) contacts are provided by residues Met-388, Gln-392, Asn-498, 524–525, Lys-547, Asp-574, and 741–750; these read SD and TGRVLEHWHT. Phe-817 contributes to the substrate binding site. Residues Asn-825 and Lys-842 each contribute to the Mo-bis(molybdopterin guanine dinucleotide) site.

This sequence belongs to the prokaryotic molybdopterin-containing oxidoreductase family. NasA/NapA/NarB subfamily. Component of the periplasmic nitrate reductase NapAB complex composed of NapA and NapB. The cofactor is [4Fe-4S] cluster. Requires Mo-bis(molybdopterin guanine dinucleotide) as cofactor. Post-translationally, predicted to be exported by the Tat system. The position of the signal peptide cleavage has not been experimentally proven.

The protein resides in the periplasm. It carries out the reaction 2 Fe(II)-[cytochrome] + nitrate + 2 H(+) = 2 Fe(III)-[cytochrome] + nitrite + H2O. Its function is as follows. Catalytic subunit of the periplasmic nitrate reductase complex NapAB. Receives electrons from NapB and catalyzes the reduction of nitrate to nitrite. This is Periplasmic nitrate reductase from Leptothrix cholodnii (strain ATCC 51168 / LMG 8142 / SP-6) (Leptothrix discophora (strain SP-6)).